Here is a 167-residue protein sequence, read N- to C-terminus: 18.8 kDa class II heat shock protein (167 aa).

One can recognise a sHSP domain in the interval 49-167 (DAKAMAATPA…KPKTVEVKVA (119 aa)).

This sequence belongs to the small heat shock protein (HSP20) family.

The protein resides in the cytoplasm. This is 18.8 kDa class II heat shock protein (SHSP-2) from Ipomoea nil (Japanese morning glory).